Here is a 269-residue protein sequence, read N- to C-terminus: 4-hydroxy-tetrahydrodipicolinate reductase (269 aa).

NAD(+) contacts are provided by residues 11 to 16 (GGSGRM) and E37. Residue R38 coordinates NADP(+). Residues 101–103 (GTT) and 125–128 (AGNM) contribute to the NAD(+) site. The active-site Proton donor/acceptor is H158. H159 contacts (S)-2,3,4,5-tetrahydrodipicolinate. K162 serves as the catalytic Proton donor. 168 to 169 (GT) contacts (S)-2,3,4,5-tetrahydrodipicolinate.

Belongs to the DapB family.

It is found in the cytoplasm. It catalyses the reaction (S)-2,3,4,5-tetrahydrodipicolinate + NAD(+) + H2O = (2S,4S)-4-hydroxy-2,3,4,5-tetrahydrodipicolinate + NADH + H(+). The enzyme catalyses (S)-2,3,4,5-tetrahydrodipicolinate + NADP(+) + H2O = (2S,4S)-4-hydroxy-2,3,4,5-tetrahydrodipicolinate + NADPH + H(+). It participates in amino-acid biosynthesis; L-lysine biosynthesis via DAP pathway; (S)-tetrahydrodipicolinate from L-aspartate: step 4/4. Functionally, catalyzes the conversion of 4-hydroxy-tetrahydrodipicolinate (HTPA) to tetrahydrodipicolinate. The protein is 4-hydroxy-tetrahydrodipicolinate reductase of Dinoroseobacter shibae (strain DSM 16493 / NCIMB 14021 / DFL 12).